A 499-amino-acid polypeptide reads, in one-letter code: Ethanolamine-phosphate phospho-lyase (499 aa).

N6-(pyridoxal phosphate)lysine is present on Lys-278. Residues Arg-468–Ser-479 show a composition bias toward basic and acidic residues. Residues Arg-468 to Thr-499 form a disordered region.

This sequence belongs to the class-III pyridoxal-phosphate-dependent aminotransferase family. Homotetramer. The cofactor is pyridoxal 5'-phosphate.

It localises to the mitochondrion. It carries out the reaction phosphoethanolamine + H2O = acetaldehyde + NH4(+) + phosphate. Functionally, catalyzes the pyridoxal-phosphate-dependent breakdown of phosphoethanolamine, converting it to ammonia, inorganic phosphate and acetaldehyde. The sequence is that of Ethanolamine-phosphate phospho-lyase (ETNPPL) from Homo sapiens (Human).